A 340-amino-acid polypeptide reads, in one-letter code: L-threonine 3-dehydrogenase (340 aa).

Cys38 serves as a coordination point for Zn(2+). Active-site charge relay system residues include Thr40 and His43. Residues His63, Glu64, Cys93, Cys96, Cys99, and Cys107 each contribute to the Zn(2+) site. Residues Ile175, Asp195, Arg200, 261–263 (LGI), and 285–286 (IY) contribute to the NAD(+) site.

Belongs to the zinc-containing alcohol dehydrogenase family. Homotetramer. Zn(2+) serves as cofactor.

The protein localises to the cytoplasm. The enzyme catalyses L-threonine + NAD(+) = (2S)-2-amino-3-oxobutanoate + NADH + H(+). The protein operates within amino-acid degradation; L-threonine degradation via oxydo-reductase pathway; glycine from L-threonine: step 1/2. Its function is as follows. Catalyzes the NAD(+)-dependent oxidation of L-threonine to 2-amino-3-ketobutyrate. The protein is L-threonine 3-dehydrogenase of Xanthomonas axonopodis pv. citri (strain 306).